A 607-amino-acid chain; its full sequence is Glutamine--fructose-6-phosphate aminotransferase [isomerizing] (607 aa).

C2 functions as the Nucleophile; for GATase activity in the catalytic mechanism. The region spanning 2–217 is the Glutamine amidotransferase type-2 domain; it reads CGIIGILGKR…DGDWAVLTRE (216 aa). 2 consecutive SIS domains span residues 277-422 and 455-597; these read TVRS…QRGF and ICRN…VDQP. The For Fru-6P isomerization activity role is filled by K602.

In terms of assembly, homodimer.

Its subcellular location is the cytoplasm. The enzyme catalyses D-fructose 6-phosphate + L-glutamine = D-glucosamine 6-phosphate + L-glutamate. In terms of biological role, catalyzes the first step in hexosamine metabolism, converting fructose-6P into glucosamine-6P using glutamine as a nitrogen source. This is Glutamine--fructose-6-phosphate aminotransferase [isomerizing] from Bartonella henselae (strain ATCC 49882 / DSM 28221 / CCUG 30454 / Houston 1) (Rochalimaea henselae).